The following is a 29-amino-acid chain: Glucagon (29 aa).

Serine 2 is modified (phosphoserine).

Belongs to the glucagon family.

It localises to the secreted. Glucagon plays a key role in glucose metabolism and homeostasis. Regulates blood glucose by increasing gluconeogenesis and decreasing glycolysis. This chain is Glucagon (GCG), found in Chinchilla chinchilla (Short-tailed chinchilla).